The chain runs to 334 residues: Ornithine carbamoyltransferase (334 aa).

Carbamoyl phosphate contacts are provided by residues 56 to 59, glutamine 83, arginine 107, and 134 to 137; these read STRT and HPTQ. L-ornithine contacts are provided by residues asparagine 168, aspartate 232, and 236–237; that span reads SM. Residues 274–275 and arginine 320 contribute to the carbamoyl phosphate site; that span reads CL.

The protein belongs to the aspartate/ornithine carbamoyltransferase superfamily. OTCase family. Homotrimer.

The protein resides in the cytoplasm. The enzyme catalyses carbamoyl phosphate + L-ornithine = L-citrulline + phosphate + H(+). The protein operates within amino-acid biosynthesis; L-arginine biosynthesis; L-arginine from L-ornithine and carbamoyl phosphate: step 1/3. Functionally, reversibly catalyzes the transfer of the carbamoyl group from carbamoyl phosphate (CP) to the N(epsilon) atom of ornithine (ORN) to produce L-citrulline. This Salmonella typhimurium (strain LT2 / SGSC1412 / ATCC 700720) protein is Ornithine carbamoyltransferase (argI).